Here is an 85-residue protein sequence, read N- to C-terminus: Elongation factor 1-beta (85 aa).

Belongs to the EF-1-beta/EF-1-delta family.

Promotes the exchange of GDP for GTP in EF-1-alpha/GDP, thus allowing the regeneration of EF-1-alpha/GTP that could then be used to form the ternary complex EF-1-alpha/GTP/AAtRNA. The chain is Elongation factor 1-beta from Methanosphaerula palustris (strain ATCC BAA-1556 / DSM 19958 / E1-9c).